Here is a 466-residue protein sequence, read N- to C-terminus: ATP synthase subunit beta (466 aa).

Position 155–162 (155–162 (GGAGVGKT)) interacts with ATP.

It belongs to the ATPase alpha/beta chains family. In terms of assembly, F-type ATPases have 2 components, CF(1) - the catalytic core - and CF(0) - the membrane proton channel. CF(1) has five subunits: alpha(3), beta(3), gamma(1), delta(1), epsilon(1). CF(0) has three main subunits: a(1), b(2) and c(9-12). The alpha and beta chains form an alternating ring which encloses part of the gamma chain. CF(1) is attached to CF(0) by a central stalk formed by the gamma and epsilon chains, while a peripheral stalk is formed by the delta and b chains.

It localises to the cell inner membrane. The catalysed reaction is ATP + H2O + 4 H(+)(in) = ADP + phosphate + 5 H(+)(out). Functionally, produces ATP from ADP in the presence of a proton gradient across the membrane. The catalytic sites are hosted primarily by the beta subunits. This Bordetella petrii (strain ATCC BAA-461 / DSM 12804 / CCUG 43448) protein is ATP synthase subunit beta.